Consider the following 346-residue polypeptide: Putative toluene-4-sulfonate monooxygenase system iron-sulfur subunit TsaM2 (346 aa).

One can recognise a Rieske domain in the interval 7–108 (WYVAGMATDC…LVERHGLLWI (102 aa)). Positions 47, 49, 66, and 69 each coordinate [2Fe-2S] cluster.

In terms of assembly, homotetramer. Part of the p-toluenesulfonate methyl-monooxygenase complex TsaBM, comprising the reductase TsaB and the oxygenase TsaM. The cofactor is [2Fe-2S] cluster.

The catalysed reaction is toluene-4-sulfonate + NADH + O2 + H(+) = 4-(hydroxymethyl)benzenesulfonate + NAD(+) + H2O. Involved in the toluene-4-sulfonate degradation pathway. Does not discriminate between the sulfonate and the carboxyl substituents and can also be involved in the p-toluenecarboxylate degradation pathway. In Comamonas testosteroni (Pseudomonas testosteroni), this protein is Putative toluene-4-sulfonate monooxygenase system iron-sulfur subunit TsaM2 (tsaM2).